The sequence spans 555 residues: Zinc transporter ZIP5 (555 aa).

The Extracellular segment spans residues 1 to 242 (MGGQTVWMTL…HSQASKTSEG (242 aa)). The tract at residues 108–148 (KHPSQSISHSHSHEDHHPSQGTTNSPPLRESLDAKSALSGS) is disordered. Residues 243–263 (FLIALGWASLALLVISLPSLV) form a helical membrane-spanning segment. The Cytoplasmic portion of the chain corresponds to 264 to 314 (ALGMAPLLQPSVLQVFLCPMAGMAVGTLCGDALLHLMPHAIFSQHTDHQNA). A helical transmembrane segment spans residues 315-335 (VFKGLSVLGGLYLLFIFESLL). The Extracellular segment spans residues 336-408 (GLKQHFKNLK…DGIHNLTDGL (73 aa)). The span at 363-374 (TSSANQNESSGH) shows a compositional bias: polar residues. A disordered region spans residues 363–383 (TSSANQNESSGHGHSHGQAEP). A helical membrane pass occupies residues 409 to 429 (AIGVAFSQSLTGGFSTAIAVF). Over 430–452 (CHELPHELGDLAVLLSAGWPVRR) the chain is Cytoplasmic. The helical transmembrane segment at 453-473 (LLVFSGLSALLGFVGVLAGSA) threads the bilayer. The Extracellular portion of the chain corresponds to 474–482 (LGNHWASHS). Residues 483–503 (PWILTLTAGVFLYVALADMMP) traverse the membrane as a helical segment. The Cytoplasmic portion of the chain corresponds to 504 to 518 (EMLHGACGSVSPLKR). A helical membrane pass occupies residues 519–539 (FLLQALGLLTGGAIMLCIALF). The Extracellular portion of the chain corresponds to 540–555 (EDHIAVSLGENSLGEN).

The protein belongs to the ZIP transporter (TC 2.A.5) family.

Its subcellular location is the basolateral cell membrane. The catalysed reaction is Zn(2+)(in) = Zn(2+)(out). Its function is as follows. Uniporter that transports zinc(2+) into polarized cells of enterocytes, pancreatic acinar and endoderm cells across the basolateral membrane and participates, notably, in zinc excretion from the intestine by the uptake of zinc from the blood into the intestine. The transport mechanism is temperature- and concentration-dependent and saturable. Mediates zinc homeostasis that is essential for venous angiogenesis. The chain is Zinc transporter ZIP5 (slc39a5) from Danio rerio (Zebrafish).